We begin with the raw amino-acid sequence, 159 residues long: Succinate dehydrogenase [ubiquinone] cytochrome b small subunit, mitochondrial (159 aa).

Residues 1–30 (MLQTRLGLGALRQGRLLFAVKSFSTTSVAK) constitute a mitochondrion transit peptide. Residues 31-65 (IFPPPPQTIKGTVNDAAVFPHHSKLHGSYHWDFER) lie on the Mitochondrial matrix side of the membrane. The chain crosses the membrane as a helical span at residues 66-82 (IIAIAMVPQVMIPLFTG). At 83 to 89 (TSHPLMD) the chain is on the mitochondrial intermembrane side. The chain crosses the membrane as a helical span at residues 90-109 (AALACTLITHAHLGFESCVI). Position 99 (histidine 99) interacts with heme. Over 110–122 (DYFPARRFKKLSP) the chain is Mitochondrial matrix. Tyrosine 111 is an a ubiquinone binding site. The chain crosses the membrane as a helical span at residues 123–140 (LMHWILRGCTVLTLIGVY). The Mitochondrial intermembrane segment spans residues 141-159 (EFNTNDIGLTEGIKKLWKS).

It belongs to the CybS family. As to quaternary structure, forms part of complex II containing four subunits: a flavoprotein (FP), an iron-sulfur protein (IP) and a cytochrome b composed of a large and a small subunit.

It is found in the mitochondrion inner membrane. Its pathway is carbohydrate metabolism; tricarboxylic acid cycle. In terms of biological role, membrane-anchoring subunit of succinate dehydrogenase (SDH) that is involved in complex II of the mitochondrial electron transport chain and is responsible for transferring electrons from succinate to ubiquinone (coenzyme Q). This Schizosaccharomyces pombe (strain 972 / ATCC 24843) (Fission yeast) protein is Succinate dehydrogenase [ubiquinone] cytochrome b small subunit, mitochondrial (sdh4).